A 412-amino-acid polypeptide reads, in one-letter code: Serine hydroxymethyltransferase (412 aa).

(6S)-5,6,7,8-tetrahydrofolate contacts are provided by residues leucine 117 and glycine 121–leucine 123. Lysine 226 carries the post-translational modification N6-(pyridoxal phosphate)lysine. Glutamate 241 is a binding site for (6S)-5,6,7,8-tetrahydrofolate.

Belongs to the SHMT family. Homodimer. Pyridoxal 5'-phosphate serves as cofactor.

It is found in the cytoplasm. The catalysed reaction is (6R)-5,10-methylene-5,6,7,8-tetrahydrofolate + glycine + H2O = (6S)-5,6,7,8-tetrahydrofolate + L-serine. It functions in the pathway one-carbon metabolism; tetrahydrofolate interconversion. Its pathway is amino-acid biosynthesis; glycine biosynthesis; glycine from L-serine: step 1/1. Functionally, catalyzes the reversible interconversion of serine and glycine with tetrahydrofolate (THF) serving as the one-carbon carrier. This reaction serves as the major source of one-carbon groups required for the biosynthesis of purines, thymidylate, methionine, and other important biomolecules. Also exhibits THF-independent aldolase activity toward beta-hydroxyamino acids, producing glycine and aldehydes, via a retro-aldol mechanism. The protein is Serine hydroxymethyltransferase of Staphylococcus carnosus (strain TM300).